We begin with the raw amino-acid sequence, 216 residues long: Nucleoside triphosphate pyrophosphatase (216 aa).

Catalysis depends on D86, which acts as the Proton acceptor.

Belongs to the Maf family. A divalent metal cation serves as cofactor.

It is found in the cytoplasm. It carries out the reaction a ribonucleoside 5'-triphosphate + H2O = a ribonucleoside 5'-phosphate + diphosphate + H(+). The catalysed reaction is a 2'-deoxyribonucleoside 5'-triphosphate + H2O = a 2'-deoxyribonucleoside 5'-phosphate + diphosphate + H(+). Its function is as follows. Nucleoside triphosphate pyrophosphatase. May have a dual role in cell division arrest and in preventing the incorporation of modified nucleotides into cellular nucleic acids. The chain is Nucleoside triphosphate pyrophosphatase from Dictyostelium discoideum (Social amoeba).